The primary structure comprises 395 residues: ATP phosphoribosyltransferase regulatory subunit (395 aa).

It belongs to the class-II aminoacyl-tRNA synthetase family. HisZ subfamily. As to quaternary structure, heteromultimer composed of HisG and HisZ subunits.

The protein resides in the cytoplasm. The protein operates within amino-acid biosynthesis; L-histidine biosynthesis; L-histidine from 5-phospho-alpha-D-ribose 1-diphosphate: step 1/9. Functionally, required for the first step of histidine biosynthesis. May allow the feedback regulation of ATP phosphoribosyltransferase activity by histidine. This Pseudomonas savastanoi pv. phaseolicola (strain 1448A / Race 6) (Pseudomonas syringae pv. phaseolicola (strain 1448A / Race 6)) protein is ATP phosphoribosyltransferase regulatory subunit.